A 478-amino-acid chain; its full sequence is Glutamate--tRNA ligase (478 aa).

Residues 9–19 (PSPTGLLHIGT) carry the 'HIGH' region motif. Positions 248–252 (KLSKR) match the 'KMSKS' region motif. Lys251 contributes to the ATP binding site.

It belongs to the class-I aminoacyl-tRNA synthetase family. Glutamate--tRNA ligase type 1 subfamily. Monomer.

It localises to the cytoplasm. It carries out the reaction tRNA(Glu) + L-glutamate + ATP = L-glutamyl-tRNA(Glu) + AMP + diphosphate. Catalyzes the attachment of glutamate to tRNA(Glu) in a two-step reaction: glutamate is first activated by ATP to form Glu-AMP and then transferred to the acceptor end of tRNA(Glu). The protein is Glutamate--tRNA ligase of Prochlorococcus marinus (strain MIT 9515).